We begin with the raw amino-acid sequence, 338 residues long: Glycerol-3-phosphate dehydrogenase [NAD(P)+] (338 aa).

Residues S13, W14, and K108 each contribute to the NADPH site. Residues K108, G139, and S141 each contribute to the sn-glycerol 3-phosphate site. A143 serves as a coordination point for NADPH. K194, D247, S257, R258, and N259 together coordinate sn-glycerol 3-phosphate. The active-site Proton acceptor is the K194. NADPH is bound at residue R258. Residues V282 and E284 each contribute to the NADPH site.

The protein belongs to the NAD-dependent glycerol-3-phosphate dehydrogenase family.

The protein resides in the cytoplasm. It carries out the reaction sn-glycerol 3-phosphate + NAD(+) = dihydroxyacetone phosphate + NADH + H(+). The catalysed reaction is sn-glycerol 3-phosphate + NADP(+) = dihydroxyacetone phosphate + NADPH + H(+). It participates in membrane lipid metabolism; glycerophospholipid metabolism. Catalyzes the reduction of the glycolytic intermediate dihydroxyacetone phosphate (DHAP) to sn-glycerol 3-phosphate (G3P), the key precursor for phospholipid synthesis. In Streptococcus agalactiae serotype V (strain ATCC BAA-611 / 2603 V/R), this protein is Glycerol-3-phosphate dehydrogenase [NAD(P)+].